A 148-amino-acid polypeptide reads, in one-letter code: Small ribosomal subunit protein uS7m (148 aa).

It belongs to the universal ribosomal protein uS7 family. Part of the small ribosomal subunit.

The protein localises to the mitochondrion. In terms of biological role, one of the primary rRNA binding proteins, it binds directly to 18S rRNA where it nucleates assembly of the head domain of the small subunit. This Arabidopsis thaliana (Mouse-ear cress) protein is Small ribosomal subunit protein uS7m (RPS7).